Here is a 156-residue protein sequence, read N- to C-terminus: Small ribosomal subunit protein uS7 (156 aa).

The protein belongs to the universal ribosomal protein uS7 family. In terms of assembly, part of the 30S ribosomal subunit. Contacts proteins S9 and S11.

Functionally, one of the primary rRNA binding proteins, it binds directly to 16S rRNA where it nucleates assembly of the head domain of the 30S subunit. Is located at the subunit interface close to the decoding center, probably blocks exit of the E-site tRNA. The sequence is that of Small ribosomal subunit protein uS7 from Pelagibacter ubique (strain HTCC1062).